Reading from the N-terminus, the 397-residue chain is B3 domain-containing protein At4g34400 (397 aa).

A DNA-binding region (TF-B3) is located at residues 14 to 107; that stretch reads PRFFTVFVSH…IFEVSIFRGY (94 aa). A disordered region spans residues 118 to 255; sequence ELEEEEEDSV…SSYAPDKEDT (138 aa). Over residues 137 to 160 the composition is skewed to basic and acidic residues; it reads TGAKSEMKNTVPEGRDKGKSKVEV. Acidic residues-rich tracts occupy residues 161–186, 212–227, and 235–246; these read VEDS…TDTD, SSDD…DSDY, and DIEENSISEEDS.

The protein resides in the nucleus. In Arabidopsis thaliana (Mouse-ear cress), this protein is B3 domain-containing protein At4g34400.